The primary structure comprises 210 residues: Ribosomal RNA small subunit methyltransferase G (210 aa).

Residues Gly-74, Phe-79, Ile-127–Glu-128, and Arg-143 contribute to the S-adenosyl-L-methionine site.

Belongs to the methyltransferase superfamily. RNA methyltransferase RsmG family.

It localises to the cytoplasm. It catalyses the reaction guanosine(527) in 16S rRNA + S-adenosyl-L-methionine = N(7)-methylguanosine(527) in 16S rRNA + S-adenosyl-L-homocysteine. Functionally, specifically methylates the N7 position of guanine in position 527 of 16S rRNA. The protein is Ribosomal RNA small subunit methyltransferase G of Chelativorans sp. (strain BNC1).